The sequence spans 338 residues: Erlin-2 (338 aa).

Topologically, residues methionine 1 to glutamine 3 are cytoplasmic. A helical transmembrane segment spans residues leucine 4–histidine 24. At lysine 25–asparagine 338 the chain is on the lumenal side. Asparagine 106 is a glycosylation site (N-linked (GlcNAc...) asparagine). The tract at residues glutamate 177–alanine 309 is interaction with ERLIN1. Position 267 is an N6-acetyllysine (lysine 267).

It belongs to the band 7/mec-2 family. As to quaternary structure, forms a heteromeric complex with ERLIN1. In complex with ERLIN1, interacts with RNF170. Interacts with activated ITPR1, independently of the degree of ITPR1 polyubiquitination. Interacts with SCAP, INSIG1, SREBF1 and SREBF2 under cholesterol sufficiency conditions; indicative for an association with the SCAP-SREBP-INSIG complex. Probably part of an AMFR/gp78 and INSIG1-containing ubiquitin ligase complex involved in ERAD of HMGCR. Interacts with TMUB1; TMUB1 bridges the association with AMFR. Interacts with SYVN1 and RNF139. Interacts with TMEM259. Interacts with TMEM41B. In terms of processing, deubiquitinated by USP25; leading to stabilization.

The protein localises to the endoplasmic reticulum membrane. Its function is as follows. Component of the ERLIN1/ERLIN2 complex which mediates the endoplasmic reticulum-associated degradation (ERAD) of inositol 1,4,5-trisphosphate receptors (IP3Rs) such as ITPR1. Promotes sterol-accelerated ERAD of HMGCR probably implicating an AMFR/gp78-containing ubiquitin ligase complex. Involved in regulation of cellular cholesterol homeostasis by regulation the SREBP signaling pathway. May promote ER retention of the SCAP-SREBF complex. This Bos taurus (Bovine) protein is Erlin-2 (ERLIN2).